Reading from the N-terminus, the 258-residue chain is Tetraspanin-18B (258 aa).

Topologically, residues 1–25 (MGLGEASARGTSMEGDCLSCIKYLM) are cytoplasmic. The helical transmembrane segment at 26–46 (FVFNFLIFLGGSFLLGVGVWV) threads the bilayer. Over 47–61 (VVDPTGFREIVAANP) the chain is Extracellular. Residues 62–82 (LLFTGVYIILAMGGMLFLLGF) traverse the membrane as a helical segment. Topologically, residues 83-94 (LGCCGAIRENKC) are cytoplasmic. A helical transmembrane segment spans residues 95–115 (LLLFFFMLILIIFLAELAAAI). The Extracellular segment spans residues 116–228 (LAFIFREHLT…SAVVDYFEMY (113 aa)). Residue Asn141 is glycosylated (N-linked (GlcNAc...) asparagine). Residues 229–249 (IYVAGALAIVVLTIELFAMVF) traverse the membrane as a helical segment. Over 250-258 (AMCLFRGIQ) the chain is Cytoplasmic.

Belongs to the tetraspanin (TM4SF) family.

The protein resides in the membrane. Functionally, may regulate angiogenesis through KDR/VEGFR2 and NOTCH1 pathways. This chain is Tetraspanin-18B (tspan18b), found in Danio rerio (Zebrafish).